A 327-amino-acid polypeptide reads, in one-letter code: MIYLIIILLKFQKNLYDLLYSVIIKEDYLRNINGILLLDKPIGLSSNLILQKIKKLFKAKKAGYIGTLDPIASGMLPIFFGDATKFSDYLLNTNKWYKIKAKLGEKTNTLDSFGKIICIRPILNIKKLNIEKILSEFQGEIYQKPPMFSSLKHLGKPLYKYARQGIYIPREKRKVYVHYIKLLSFSKKYFSLTIKCSKGTYVRSIVDDIGEKLFCGAHIVKLRRTKLFNYKESHMIDSNKLYNIKKKFNDLKKLDECLLPIESIFKKLPIIVVNDDIINRLRNGIKLNFWKIKKNNLFKIISKDTKKFVGIIDINKYGRANSIKLIK.

Asp69 (nucleophile) is an active-site residue. 3 residues coordinate substrate: Tyr97, Tyr201, and Leu222.

The protein belongs to the pseudouridine synthase TruB family. Type 1 subfamily.

It catalyses the reaction uridine(55) in tRNA = pseudouridine(55) in tRNA. Responsible for synthesis of pseudouridine from uracil-55 in the psi GC loop of transfer RNAs. This chain is tRNA pseudouridine synthase B, found in Wigglesworthia glossinidia brevipalpis.